The sequence spans 563 residues: Arginine--tRNA ligase (563 aa).

The protein belongs to the class-I aminoacyl-tRNA synthetase family. In terms of assembly, monomer.

The catalysed reaction is tRNA(Arg) + L-arginine + ATP = L-arginyl-tRNA(Arg) + AMP + diphosphate. The polypeptide is Arginine--tRNA ligase (Encephalitozoon cuniculi (strain GB-M1) (Microsporidian parasite)).